The sequence spans 97 residues: YcgL domain-containing protein Avin_32960 (97 aa).

The region spanning 3-87 is the YcgL domain; that stretch reads CICSIYKSPR…PEEEYVEHLP (85 aa).

In Azotobacter vinelandii (strain DJ / ATCC BAA-1303), this protein is YcgL domain-containing protein Avin_32960.